A 250-amino-acid chain; its full sequence is Short-chain dehydrogenase RED3 (250 aa).

Positions 16, 35, 63, and 91 each coordinate NADP(+). Catalysis depends on proton donor residues S145 and Y164. NADP(+) is bound by residues Y164, K168, V195, and S197. The active-site Lowers pKa of active site Tyr is K168.

It belongs to the short-chain dehydrogenases/reductases (SDR) family.

It functions in the pathway polyketide biosynthesis. In terms of biological role, short-chain dehydrogenase; part of the gene cluster that mediates the biosynthesis of pyriculol and pyriculariol, two heptaketides that induce lesion formation upon application on rice leaves but are dispensable for pathogenicity. The highly reducing polyketide synthase synthesizes the heptaketide backbone of pyriculol and pyriculariol. Pyriculol and pyriculariol contain several hydroxyl moieties and double bonds, so it can be assumed that several reduction steps occur during biosynthesis. These reactions could be executed by PKS19 itself or partly by the tailoring enzymes OXR1, OXR2, RED1, RED2 or RED3, identified within the cluster. The FAD-linked oxidoreductase OXR1 is the only tailoring enzyme for which the function has been determined yet, and is involved in the oxidation of dihydropyriculol and dihydropyriculariol into pyriculol and pyriculariol, respectively. This is Short-chain dehydrogenase RED3 from Pyricularia oryzae (strain 70-15 / ATCC MYA-4617 / FGSC 8958) (Rice blast fungus).